Reading from the N-terminus, the 675-residue chain is Alpha-1,4-glucan:maltose-1-phosphate maltosyltransferase (675 aa).

Lys256, Gln316, and Asp351 together coordinate alpha-maltose 1-phosphate. Catalysis depends on Asp386, which acts as the Nucleophile. Asn387 serves as a coordination point for alpha-maltose 1-phosphate. The active-site Proton donor is the Glu415. 525–526 contacts alpha-maltose 1-phosphate; sequence KY.

Belongs to the glycosyl hydrolase 13 family. GlgE subfamily. In terms of assembly, homodimer.

It carries out the reaction alpha-maltose 1-phosphate + [(1-&gt;4)-alpha-D-glucosyl](n) = [(1-&gt;4)-alpha-D-glucosyl](n+2) + phosphate. Functionally, maltosyltransferase that uses maltose 1-phosphate (M1P) as the sugar donor to elongate linear or branched alpha-(1-&gt;4)-glucans. Is involved in a branched alpha-glucan biosynthetic pathway from trehalose, together with TreS, Mak and GlgB. This chain is Alpha-1,4-glucan:maltose-1-phosphate maltosyltransferase, found in Corynebacterium glutamicum (strain ATCC 13032 / DSM 20300 / JCM 1318 / BCRC 11384 / CCUG 27702 / LMG 3730 / NBRC 12168 / NCIMB 10025 / NRRL B-2784 / 534).